Consider the following 173-residue polypeptide: HTH-type transcriptional regulator IscR (173 aa).

Positions 2-131 (RLTSKGRYAV…NNITLGELMM (130 aa)) constitute an HTH rrf2-type domain. The segment at residues 28-51 (LADISERQGISLSYLEQLFSKLRK) is a DNA-binding region (H-T-H motif). [2Fe-2S] cluster is bound by residues Cys92, Cys98, and Cys104.

[2Fe-2S] cluster is required as a cofactor.

In terms of biological role, regulates the transcription of several operons and genes involved in the biogenesis of Fe-S clusters and Fe-S-containing proteins. The protein is HTH-type transcriptional regulator IscR of Vibrio cholerae serotype O1 (strain ATCC 39315 / El Tor Inaba N16961).